We begin with the raw amino-acid sequence, 557 residues long: 2,3-bisphosphoglycerate-independent phosphoglycerate mutase 1 (557 aa).

Aspartate 27 and serine 80 together coordinate Mn(2+). Serine 80 acts as the Phosphoserine intermediate in catalysis. Substrate-binding positions include histidine 139, 169-170, arginine 205, arginine 212, 285-288, and lysine 360; these read RD and RADR. Residues aspartate 429, histidine 433, aspartate 470, histidine 471, and histidine 500 each coordinate Mn(2+).

This sequence belongs to the BPG-independent phosphoglycerate mutase family. Monomer. Mn(2+) is required as a cofactor.

The protein resides in the cytoplasm. The enzyme catalyses (2R)-2-phosphoglycerate = (2R)-3-phosphoglycerate. It functions in the pathway carbohydrate degradation; glycolysis; pyruvate from D-glyceraldehyde 3-phosphate: step 3/5. Functionally, catalyzes the interconversion of 2-phosphoglycerate (2-PGA) and 3-phosphoglycerate (3-PGA). Required for guard cell function (e.g. blue light-, abscisic acid- (ABA), and low CO(2)-regulated stomatal movements) and fertility (e.g. pollen grains production). This chain is 2,3-bisphosphoglycerate-independent phosphoglycerate mutase 1 (PGM1), found in Arabidopsis thaliana (Mouse-ear cress).